Reading from the N-terminus, the 1406-residue chain is Carboxypeptidase D (1406 aa).

Positions 1–25 (MPTLGLLFASIGIAVLAMGVPHCRG) are cleaved as a signal peptide. Over 26-1312 (YTIKEDESFL…VNEHVFGLPR (1287 aa)) the chain is Extracellular. 2 Peptidase M14 domains span residues 39–335 (HYAS…LRQA) and 455–760 (EHHN…IEQV). Residues H101 and E104 each contribute to the Zn(2+) site. Residue N133 is glycosylated (N-linked (GlcNAc...) asparagine). Cystine bridges form between C156–C309, C236–C237, and C268–C308. Residue H217 coordinates Zn(2+). N269 carries N-linked (GlcNAc...) asparagine glycosylation. The Proton donor/acceptor role is filled by E305. The N-linked (GlcNAc...) asparagine glycan is linked to N458. H517 and E520 together coordinate Zn(2+). N549 and N612 each carry an N-linked (GlcNAc...) asparagine glycan. Position 626 (H626) interacts with Zn(2+). N-linked (GlcNAc...) asparagine glycosylation occurs at N652. E730 acts as the Proton donor/acceptor in catalysis. N-linked (GlcNAc...) asparagine glycans are attached at residues N787, N808, N981, N1152, and N1251. The Peptidase M14 3 domain maps to 863 to 1121 (RYHTNPQVRA…DKIKNFLALV (259 aa)). The helical transmembrane segment at 1313-1333 (FLFILCASVLIIVGVIVCVLC) threads the bilayer. At 1334-1406 (AQFWFYRRHR…TNYSFIIQAA (73 aa)) the chain is on the cytoplasmic side. Residues 1343 to 1345 (RGD) carry the Cell attachment site motif. A Phosphoserine modification is found at S1380.

It belongs to the peptidase M14 family. As to quaternary structure, monomer. Zn(2+) serves as cofactor. In terms of tissue distribution, expressed in the central nervous system (CNS) of adults and larvae. In the adult brain, increased levels of expression in the mushroom body (MB) and neurosecretory cells.

The protein localises to the membrane. Its subcellular location is the cytoplasm. It localises to the perinuclear region. It is found in the golgi apparatus. The protein resides in the trans-Golgi network. The protein localises to the secreted. The catalysed reaction is Releases C-terminal Arg and Lys from polypeptides.. Its activity is regulated as follows. Inhibited by 2-guanidinoethylmercaptosuccinic acid (GEMSA). Its function is as follows. Metallocarboxypeptidase that catalyzes the release of C-terminal arginine or lysine residues from peptides and proteins. Functionally important for processing a broad range of proteins including growth factors, peptide hormones (such as Akh) and neuropeptides. Consequently, it is involved in a wide range of processes including viability, memory formation, locomotive activity, wing formation, and peptide-regulated behaviors such as starvation-induced hyperactivity, appetitive gustatory preference, and cold and ethanol sensitivity. Key enzyme in neuropeptide processing. Involved in regulation of memory formation, possibly via the insulin pathway in neurosecretory cells. This is Carboxypeptidase D from Drosophila melanogaster (Fruit fly).